A 195-amino-acid polypeptide reads, in one-letter code: Pyridoxal 5'-phosphate synthase subunit PdxT (195 aa).

46 to 48 (GES) is an L-glutamine binding site. Residue C78 is the Nucleophile of the active site. L-glutamine is bound by residues R105 and 133–134 (IR). Catalysis depends on charge relay system residues H169 and E171.

It belongs to the glutaminase PdxT/SNO family. In terms of assembly, in the presence of PdxS, forms a dodecamer of heterodimers. Only shows activity in the heterodimer.

It carries out the reaction aldehydo-D-ribose 5-phosphate + D-glyceraldehyde 3-phosphate + L-glutamine = pyridoxal 5'-phosphate + L-glutamate + phosphate + 3 H2O + H(+). The enzyme catalyses L-glutamine + H2O = L-glutamate + NH4(+). Its pathway is cofactor biosynthesis; pyridoxal 5'-phosphate biosynthesis. Functionally, catalyzes the hydrolysis of glutamine to glutamate and ammonia as part of the biosynthesis of pyridoxal 5'-phosphate. The resulting ammonia molecule is channeled to the active site of PdxS. The protein is Pyridoxal 5'-phosphate synthase subunit PdxT of Geobacillus thermodenitrificans (strain NG80-2).